Reading from the N-terminus, the 98-residue chain is N(2)-fixation sustaining protein CowN (98 aa).

The protein belongs to the CowN family.

Functionally, is required to sustain N(2)-dependent growth in the presence of low levels of carbon monoxide (CO). Probably acts by protecting the N(2) fixation ability of the nitrogenase complex, which is inactivated in the presence of CO. The chain is N(2)-fixation sustaining protein CowN from Paramagnetospirillum magneticum (strain ATCC 700264 / AMB-1) (Magnetospirillum magneticum).